Consider the following 510-residue polypeptide: Leucine-rich repeat protein lrrA (510 aa).

LRR repeat units follow at residues 14-34 (YRKR…PPTI), 35-59 (GALQ…IGKL), 60-82 (SKVE…IGSL), 84-106 (TLKQ…NIGA), 107-130 (LKNL…ISNC), 132-152 (ALEY…EFGK), 153-176 (LYNL…ISGW), 177-200 (VKLE…CLLG), 202-222 (LSTL…LSSM), 224-245 (SLTN…LSNL), 246-270 (RQLK…LLSE), 272-292 (IELD…IATL), 293-315 (INLQ…VGNL), 316-340 (INLQ…IGKL), 341-363 (VNLK…IASM), 365-386 (ALKE…IGEL), 387-408 (SGLT…SFGN), 410-432 (SELQ…LDGL), 433-458 (KSCT…LIGL), and 460-478 (ILDV…IVMK).

The protein localises to the cytoplasm. Functionally, involved in cytoskeleton remodeling, which is needed for normal chemotactic aggregation and efficient cell sorting during multicellular morphogenesis. This Dictyostelium discoideum (Social amoeba) protein is Leucine-rich repeat protein lrrA (lrrA).